Here is a 518-residue protein sequence, read N- to C-terminus: Mitochondrial 2-methylisocitrate lyase (518 aa).

Belongs to the isocitrate lyase/PEP mutase superfamily. Isocitrate lyase family.

It is found in the mitochondrion matrix. It localises to the cytoplasm. The catalysed reaction is (2S,3R)-3-hydroxybutane-1,2,3-tricarboxylate = pyruvate + succinate. Its pathway is organic acid metabolism; propanoate degradation. In terms of biological role, catalyzes the formation of pyruvate and succinate from 2-methylisocitrate during the metabolism of endogenous propionyl-CoA. Does not act on isocitrate. This Schizosaccharomyces pombe (strain 972 / ATCC 24843) (Fission yeast) protein is Mitochondrial 2-methylisocitrate lyase (icl2).